The following is a 978-amino-acid chain: Monofunctional C1-tetrahydrofolate synthase, mitochondrial (978 aa).

Residues 1–10 are compositionally biased toward low complexity; it reads MGTRLPLVLR. Residues 1-31 constitute a mitochondrion transit peptide; the sequence is MGTRLPLVLRQLRRPPQPPGPPRRLRVPCRA. The interval 1–71 is disordered; the sequence is MGTRLPLVLR…SPGGRTPAAR (71 aa). Residues 31-348 form a methylenetetrahydrofolate dehydrogenase and cyclohydrolase region; it reads ASSGGGGGGG…REQQHRRWRL (318 aa). Residues 33 to 45 show a composition bias toward gly residues; it reads SGGGGGGGGGREG. Lys189 is subject to N6-acetyllysine; alternate. Lys189 carries the N6-succinyllysine; alternate modification. The formyltetrahydrofolate synthetase stretch occupies residues 349–978; that stretch reads HCLKLQPLSP…TETEQVKGLF (630 aa). Residue Ser357 is modified to Phosphoserine. ATP is bound at residue 423 to 430; that stretch reads TPLGEGKS. At Lys596 the chain carries N6-succinyllysine.

It in the N-terminal section; belongs to the tetrahydrofolate dehydrogenase/cyclohydrolase family. The protein in the C-terminal section; belongs to the formate--tetrahydrofolate ligase family. In terms of assembly, homodimer. Detected in most tissues, highest expression found in placenta, thymus and brain. Low expression is found in liver and skeletal muscle. Up-regulated in colon adenocarcinoma.

It localises to the mitochondrion. It catalyses the reaction (6S)-5,6,7,8-tetrahydrofolate + formate + ATP = (6R)-10-formyltetrahydrofolate + ADP + phosphate. The protein operates within one-carbon metabolism; tetrahydrofolate interconversion. In terms of biological role, may provide the missing metabolic reaction required to link the mitochondria and the cytoplasm in the mammalian model of one-carbon folate metabolism complementing thus the enzymatic activities of MTHFD2. The protein is Monofunctional C1-tetrahydrofolate synthase, mitochondrial of Homo sapiens (Human).